We begin with the raw amino-acid sequence, 312 residues long: D-alanine--D-alanine ligase (312 aa).

Positions 108 to 308 (KLVWQQTGIP…YSELVVKVLS (201 aa)) constitute an ATP-grasp domain. 138–193 (VAKLGMPLFVKPASEGSSVAVEKVKSADALPAALEEAAKHDKIVIVEKSIEGGGEY) is a binding site for ATP. 3 residues coordinate Mg(2+): Asp262, Glu275, and Asn277.

This sequence belongs to the D-alanine--D-alanine ligase family. The cofactor is Mg(2+). Mn(2+) serves as cofactor.

It is found in the cytoplasm. It catalyses the reaction 2 D-alanine + ATP = D-alanyl-D-alanine + ADP + phosphate + H(+). Its pathway is cell wall biogenesis; peptidoglycan biosynthesis. Its function is as follows. Cell wall formation. The sequence is that of D-alanine--D-alanine ligase from Burkholderia thailandensis (strain ATCC 700388 / DSM 13276 / CCUG 48851 / CIP 106301 / E264).